The chain runs to 511 residues: ATP synthase subunit alpha, plastid (511 aa).

Position 170–177 (170–177) interacts with ATP; it reads GDRQTGKT.

Belongs to the ATPase alpha/beta chains family. As to quaternary structure, F-type ATPases have 2 components, CF(1) - the catalytic core - and CF(0) - the membrane proton channel. CF(1) has five subunits: alpha(3), beta(3), gamma(1), delta(1), epsilon(1). CF(0) has four main subunits: a, b, b' and c.

It is found in the plastid membrane. The catalysed reaction is ATP + H2O + 4 H(+)(in) = ADP + phosphate + 5 H(+)(out). Produces ATP from ADP in the presence of a proton gradient across the membrane. The alpha chain is a regulatory subunit. This is ATP synthase subunit alpha, plastid from Cuscuta reflexa (Southern Asian dodder).